Here is a 266-residue protein sequence, read N- to C-terminus: GTP cyclohydrolase FolE2 1 (266 aa).

Belongs to the GTP cyclohydrolase IV family.

The enzyme catalyses GTP + H2O = 7,8-dihydroneopterin 3'-triphosphate + formate + H(+). It functions in the pathway cofactor biosynthesis; 7,8-dihydroneopterin triphosphate biosynthesis; 7,8-dihydroneopterin triphosphate from GTP: step 1/1. Converts GTP to 7,8-dihydroneopterin triphosphate. The protein is GTP cyclohydrolase FolE2 1 of Dechloromonas aromatica (strain RCB).